A 598-amino-acid polypeptide reads, in one-letter code: Aspartate--tRNA ligase (598 aa).

Glu-182 contributes to the L-aspartate binding site. The interval 206–209 is aspartate; sequence QLFK. Arg-228 contributes to the L-aspartate binding site. ATP is bound by residues 228–230 and Gln-237; that span reads RDE. Residue His-456 coordinates L-aspartate. Glu-490 contacts ATP. Arg-497 is an L-aspartate binding site. 542–545 is a binding site for ATP; that stretch reads GVDR.

It belongs to the class-II aminoacyl-tRNA synthetase family. Type 1 subfamily. In terms of assembly, homodimer.

Its subcellular location is the cytoplasm. The catalysed reaction is tRNA(Asp) + L-aspartate + ATP = L-aspartyl-tRNA(Asp) + AMP + diphosphate. In terms of biological role, catalyzes the attachment of L-aspartate to tRNA(Asp) in a two-step reaction: L-aspartate is first activated by ATP to form Asp-AMP and then transferred to the acceptor end of tRNA(Asp). The sequence is that of Aspartate--tRNA ligase from Agathobacter rectalis (strain ATCC 33656 / DSM 3377 / JCM 17463 / KCTC 5835 / VPI 0990) (Eubacterium rectale).